The chain runs to 203 residues: Thymidylate kinase (203 aa).

ATP is bound at residue 9–16 (GPEGSGKT).

It belongs to the thymidylate kinase family.

The enzyme catalyses dTMP + ATP = dTDP + ADP. Its function is as follows. Phosphorylation of dTMP to form dTDP in both de novo and salvage pathways of dTTP synthesis. This is Thymidylate kinase from Staphylococcus haemolyticus (strain JCSC1435).